A 1151-amino-acid polypeptide reads, in one-letter code: Importin beta (1151 aa).

24 HEAT repeats span residues M1–E36, P37–N82, P83–F132, P133–G175, G176–I222, P223–K269, P270–K316, A317–F377, P378–K416, E417–A453, P454–K495, A496–D540, F541–L593, P594–F642, P643–T704, P705–S756, P757–E811, T812–D880, L881–S932, P933–D978, P979–F1027, P1028–D1074, P1075–Q1120, and I1121–Q1151.

The protein belongs to the importin beta family.

Its subcellular location is the nucleus intermembrane space. The protein resides in the cytoplasm. The protein localises to the nucleus. In terms of biological role, functions in nuclear protein import as nuclear transport receptor. Involved in encystation process. Constitutive expression enhances cyst production and increases transcription of endogenous genes involved in encystation. Level of mRNA of the transcriptional factor myb1-like protein increases in early stages of the encystation process followed by increased mRNAs of the cyst wall proteins cwp1-3. The protein is Importin beta of Giardia intestinalis (strain ATCC 50803 / WB clone C6) (Giardia lamblia).